The following is a 475-amino-acid chain: NADP-dependent glyceraldehyde-3-phosphate dehydrogenase (475 aa).

Arg103 provides a ligand contact to substrate. Ser151 provides a ligand contact to NADP(+). 154–155 (NY) is a substrate binding site. NADP(+) contacts are provided by residues Lys177, Thr180, Asp215, and 230–251 (GSTGIGERIGKMAGMRPIMLEL). Active-site residues include Glu250 and Cys284. 283–285 (RCT) serves as a coordination point for substrate. Position 377 (Glu377) interacts with NADP(+). Arg437 serves as a coordination point for substrate.

The protein belongs to the aldehyde dehydrogenase family. In terms of assembly, homotetramer.

It carries out the reaction D-glyceraldehyde 3-phosphate + NADP(+) + H2O = (2R)-3-phosphoglycerate + NADPH + 2 H(+). In Streptococcus mutans serotype c (strain ATCC 700610 / UA159), this protein is NADP-dependent glyceraldehyde-3-phosphate dehydrogenase (gapN).